Consider the following 306-residue polypeptide: Protein FdhE homolog (306 aa).

The protein belongs to the FdhE family.

The protein localises to the cytoplasm. In terms of biological role, necessary for formate dehydrogenase activity. The polypeptide is Protein FdhE homolog (Proteus mirabilis (strain HI4320)).